The primary structure comprises 347 residues: tRNA pseudouridine synthase D (347 aa).

Aspartate 81 functions as the Nucleophile in the catalytic mechanism. The TRUD domain occupies 158–305 (GVPNYFGSQR…RHDRRDIALK (148 aa)).

Belongs to the pseudouridine synthase TruD family.

The enzyme catalyses uridine(13) in tRNA = pseudouridine(13) in tRNA. Responsible for synthesis of pseudouridine from uracil-13 in transfer RNAs. The protein is tRNA pseudouridine synthase D of Vibrio campbellii (strain ATCC BAA-1116).